The primary structure comprises 109 residues: Avian agnoprotein 2b (109 aa).

The disordered stretch occupies residues 89-109; that stretch reads QPALASRLTQPNRPNRGRLAK.

The protein resides in the host cytoplasm. The protein is Avian agnoprotein 2b of Psittacidae (parrots).